Reading from the N-terminus, the 57-residue chain is UPF0057 membrane protein T23F2.3 (57 aa).

Transmembrane regions (helical) follow at residues 4–24 (TCTDIPKFICAVLLPPIGVFL) and 36–56 (ILLTILGYIPGIIYACYVILA).

This sequence belongs to the UPF0057 (PMP3) family.

It localises to the membrane. This is UPF0057 membrane protein T23F2.3 from Caenorhabditis elegans.